The sequence spans 672 residues: F(420)H(2) dehydrogenase subunit L (672 aa).

Helical transmembrane passes span 8–28, 37–57, 79–99, 136–156, 179–199, 225–245, 265–285, 298–318, 337–357, 360–380, 394–414, 447–467, 483–503, 545–565, 601–621, and 652–672; these read EFAF…FFFG, IVPI…TLGL, ILID…SLLI, ILQL…LIGF, VMFL…SGGF, ILGF…GGAV, TTVS…YLVA, LMVV…MGIV, MMLG…ISLF, INHA…IHAV, VMPI…GFGI, YVFS…LIFM, PAIM…FGAL, LAVL…AFVI, FSIG…DVII, and TALI…MEVL.

The protein belongs to the complex I subunit 5 family. The FPO complex is composed of at least 13 different subunits. FpoA, FpoH, FpoJ, FpoK, FpoL, FpoM and FpoN proteins constitute the membrane sector of the complex.

It localises to the cell membrane. It carries out the reaction methanophenazine + reduced coenzyme F420-(gamma-L-Glu)(n) = dihydromethanophenazine + oxidized coenzyme F420-(gamma-L-Glu)(n) + H(+). Its function is as follows. Component of the F(420)H(2) dehydrogenase (FPO complex) which is part of the energy-conserving F(420)H(2):heterodisulfide oxidoreductase system. The membrane-bound electron transfer system of the complex plays an important role in the metabolism of methylotrophic methanogens when the organisms grow on methanol or methylamines. Catalyzes the oxidation of methanophenazine to dihydromethanophenazine. It shuttles electrons from F(420)H(2), via FAD and iron-sulfur (Fe-S) centers, to methanophenazine (an electron carrier in the membrane). It couples the redox reaction to proton translocation (for every two electrons transferred, two hydrogen ions are translocated across the cytoplasmic membrane), and thus conserves the redox energy in a proton gradient. It also catalyzes the oxidation of F(420)H(2) with quinones such as 2,3-dimethyl-1,4-naphthoquinone, 2-methyl-1,4-naphthoquinone and tetramethyl-p-benzoquinone. This Methanosarcina mazei (strain ATCC BAA-159 / DSM 3647 / Goe1 / Go1 / JCM 11833 / OCM 88) (Methanosarcina frisia) protein is F(420)H(2) dehydrogenase subunit L (fpoL).